A 285-amino-acid polypeptide reads, in one-letter code: 4-diphosphocytidyl-2-C-methyl-D-erythritol kinase (285 aa).

The active site involves Lys12. 95-105 contacts ATP; it reads PMGGGVGGGSS. Residue Asp137 is part of the active site.

It belongs to the GHMP kinase family. IspE subfamily.

It carries out the reaction 4-CDP-2-C-methyl-D-erythritol + ATP = 4-CDP-2-C-methyl-D-erythritol 2-phosphate + ADP + H(+). The protein operates within isoprenoid biosynthesis; isopentenyl diphosphate biosynthesis via DXP pathway; isopentenyl diphosphate from 1-deoxy-D-xylulose 5-phosphate: step 3/6. Its function is as follows. Catalyzes the phosphorylation of the position 2 hydroxy group of 4-diphosphocytidyl-2C-methyl-D-erythritol. The chain is 4-diphosphocytidyl-2-C-methyl-D-erythritol kinase from Actinobacillus pleuropneumoniae serotype 3 (strain JL03).